The sequence spans 471 residues: MKVTQEKLPASQIGLEIEITPEITQKTYEQVIKNLSRTVNIPGFRKGKVPRQVLLQRLGKTHIKAAALEELLQDGIEQAIKQESIAAIGQPRLRSSFDDLINSYEPGQPLTFTAAVDVEPEINLVQYTGLEAKAEEIKYDPARVDEVLEKERQELATLIPVEGRAAQIGDVAVVDFKGVIAKAEGDDENAEPEPIPGGDASDFQVELQEDKFIPGFVTGIVGMNPGDTKEVSAQFPDPYVNQELAGKPAIFTVTLKEIKEKELPELNDDFAQEVSDFDTLEALRASLAERYQKEAEDKTKNNQQEALLGELVKHIEVDLPETLIEKEVDAMLTQTAMRLSQQGLDVKKLFTQDIIPQLRERSRPEAVERLKRSLGLQEVAKRESIAVTPEEIQARVTELVQQYPDEDIDVERLHTIVENELLSEKIIDWLLANSTIELVPEGSLASQESEITAPETEAETIEVTAESTTGE.

The PPIase FKBP-type domain maps to glycine 169–proline 264. The tract at residues serine 443–glutamate 471 is disordered. Low complexity predominate over residues glutamate 448 to glutamate 471.

Belongs to the FKBP-type PPIase family. Tig subfamily.

The protein localises to the cytoplasm. The catalysed reaction is [protein]-peptidylproline (omega=180) = [protein]-peptidylproline (omega=0). In terms of biological role, involved in protein export. Acts as a chaperone by maintaining the newly synthesized protein in an open conformation. Functions as a peptidyl-prolyl cis-trans isomerase. This is Trigger factor from Trichormus variabilis (strain ATCC 29413 / PCC 7937) (Anabaena variabilis).